A 342-amino-acid polypeptide reads, in one-letter code: Holliday junction branch migration complex subunit RuvB (342 aa).

The tract at residues 1-179 (MTNILSPEKS…FGIPMRLNFY (179 aa)) is large ATPase domain (RuvB-L). ATP contacts are provided by residues I18, R19, G60, K63, T64, T65, 126-128 (EDF), R169, Y179, and R216. T64 serves as a coordination point for Mg(2+). The tract at residues 180–250 (NTGELKKVLN…ISDFGLNRLE (71 aa)) is small ATPAse domain (RuvB-S). Positions 253-342 (RIGLDSNDYR…HQFNIFNENE (90 aa)) are head domain (RuvB-H). Positions 289, 308, and 313 each coordinate DNA.

It belongs to the RuvB family. In terms of assembly, homohexamer. Forms an RuvA(8)-RuvB(12)-Holliday junction (HJ) complex. HJ DNA is sandwiched between 2 RuvA tetramers; dsDNA enters through RuvA and exits via RuvB. An RuvB hexamer assembles on each DNA strand where it exits the tetramer. Each RuvB hexamer is contacted by two RuvA subunits (via domain III) on 2 adjacent RuvB subunits; this complex drives branch migration. In the full resolvosome a probable DNA-RuvA(4)-RuvB(12)-RuvC(2) complex forms which resolves the HJ.

The protein localises to the cytoplasm. The enzyme catalyses ATP + H2O = ADP + phosphate + H(+). Its function is as follows. The RuvA-RuvB-RuvC complex processes Holliday junction (HJ) DNA during genetic recombination and DNA repair, while the RuvA-RuvB complex plays an important role in the rescue of blocked DNA replication forks via replication fork reversal (RFR). RuvA specifically binds to HJ cruciform DNA, conferring on it an open structure. The RuvB hexamer acts as an ATP-dependent pump, pulling dsDNA into and through the RuvAB complex. RuvB forms 2 homohexamers on either side of HJ DNA bound by 1 or 2 RuvA tetramers; 4 subunits per hexamer contact DNA at a time. Coordinated motions by a converter formed by DNA-disengaged RuvB subunits stimulates ATP hydrolysis and nucleotide exchange. Immobilization of the converter enables RuvB to convert the ATP-contained energy into a lever motion, pulling 2 nucleotides of DNA out of the RuvA tetramer per ATP hydrolyzed, thus driving DNA branch migration. The RuvB motors rotate together with the DNA substrate, which together with the progressing nucleotide cycle form the mechanistic basis for DNA recombination by continuous HJ branch migration. Branch migration allows RuvC to scan DNA until it finds its consensus sequence, where it cleaves and resolves cruciform DNA. This Rickettsia conorii (strain ATCC VR-613 / Malish 7) protein is Holliday junction branch migration complex subunit RuvB.